A 347-amino-acid chain; its full sequence is D-alanine--D-alanine ligase (347 aa).

The region spanning 134 to 332 (KLYAKDLGVK…LAQSLPKTPK (199 aa)) is the ATP-grasp domain. 161–216 (LIKFNFPFIVKPSNAGSSLGVNVVKEEKELVYALDSAFEYSKEVLIEPFIQGVKEY) contributes to the ATP binding site. The Mg(2+) site is built by Asp-288, Glu-300, and Asn-302.

Belongs to the D-alanine--D-alanine ligase family. The cofactor is Mg(2+). Requires Mn(2+) as cofactor.

The protein resides in the cytoplasm. It catalyses the reaction 2 D-alanine + ATP = D-alanyl-D-alanine + ADP + phosphate + H(+). It functions in the pathway cell wall biogenesis; peptidoglycan biosynthesis. Functionally, cell wall formation. This Helicobacter pylori (strain P12) protein is D-alanine--D-alanine ligase.